A 1058-amino-acid chain; its full sequence is Isoleucine--tRNA ligase (1058 aa).

Residues 48 to 58 (PYTTGHIHLGT) carry the 'HIGH' region motif. A 'KMSKS' region motif is present at residues 596–600 (KMSKS). Lys599 serves as a coordination point for ATP.

It belongs to the class-I aminoacyl-tRNA synthetase family. IleS type 2 subfamily. In terms of assembly, monomer. The cofactor is Zn(2+).

It is found in the cytoplasm. The enzyme catalyses tRNA(Ile) + L-isoleucine + ATP = L-isoleucyl-tRNA(Ile) + AMP + diphosphate. Functionally, catalyzes the attachment of isoleucine to tRNA(Ile). As IleRS can inadvertently accommodate and process structurally similar amino acids such as valine, to avoid such errors it has two additional distinct tRNA(Ile)-dependent editing activities. One activity is designated as 'pretransfer' editing and involves the hydrolysis of activated Val-AMP. The other activity is designated 'posttransfer' editing and involves deacylation of mischarged Val-tRNA(Ile). The chain is Isoleucine--tRNA ligase from Methanosarcina acetivorans (strain ATCC 35395 / DSM 2834 / JCM 12185 / C2A).